We begin with the raw amino-acid sequence, 321 residues long: Acetyl-coenzyme A carboxylase carboxyl transferase subunit alpha (321 aa).

One can recognise a CoA carboxyltransferase C-terminal domain in the interval 39 to 293 (RLQQKSQTLA…RRALGDSLRQ (255 aa)).

Belongs to the AccA family. In terms of assembly, acetyl-CoA carboxylase is a heterohexamer composed of biotin carboxyl carrier protein (AccB), biotin carboxylase (AccC) and two subunits each of ACCase subunit alpha (AccA) and ACCase subunit beta (AccD).

Its subcellular location is the cytoplasm. It carries out the reaction N(6)-carboxybiotinyl-L-lysyl-[protein] + acetyl-CoA = N(6)-biotinyl-L-lysyl-[protein] + malonyl-CoA. Its pathway is lipid metabolism; malonyl-CoA biosynthesis; malonyl-CoA from acetyl-CoA: step 1/1. Its function is as follows. Component of the acetyl coenzyme A carboxylase (ACC) complex. First, biotin carboxylase catalyzes the carboxylation of biotin on its carrier protein (BCCP) and then the CO(2) group is transferred by the carboxyltransferase to acetyl-CoA to form malonyl-CoA. This Bordetella avium (strain 197N) protein is Acetyl-coenzyme A carboxylase carboxyl transferase subunit alpha.